The chain runs to 401 residues: Nicotinate phosphoribosyltransferase (401 aa).

Histidine 221 bears the Phosphohistidine; by autocatalysis mark.

It belongs to the NAPRTase family. Transiently phosphorylated on a His residue during the reaction cycle. Phosphorylation strongly increases the affinity for substrates and increases the rate of nicotinate D-ribonucleotide production. Dephosphorylation regenerates the low-affinity form of the enzyme, leading to product release.

The catalysed reaction is nicotinate + 5-phospho-alpha-D-ribose 1-diphosphate + ATP + H2O = nicotinate beta-D-ribonucleotide + ADP + phosphate + diphosphate. Its pathway is cofactor biosynthesis; NAD(+) biosynthesis; nicotinate D-ribonucleotide from nicotinate: step 1/1. Its function is as follows. Catalyzes the synthesis of beta-nicotinate D-ribonucleotide from nicotinate and 5-phospho-D-ribose 1-phosphate at the expense of ATP. This Pectobacterium carotovorum subsp. carotovorum (strain PC1) protein is Nicotinate phosphoribosyltransferase.